Consider the following 156-residue polypeptide: Small ribosomal subunit protein bS18c (156 aa).

Positions 1-54 (MYTSKQPFLKSKQPFRKSKQPFRKSKQPFRKFKKPFRKSKQPFRRRPRIGPGDR) are disordered. Over residues 13 to 48 (QPFRKSKQPFRKSKQPFRKFKKPFRKSKQPFRRRPR) the composition is skewed to basic residues.

The protein belongs to the bacterial ribosomal protein bS18 family. In terms of assembly, part of the 30S ribosomal subunit.

The protein localises to the plastid. It is found in the chloroplast. This is Small ribosomal subunit protein bS18c from Lolium perenne (Perennial ryegrass).